Reading from the N-terminus, the 293-residue chain is Glutamyl-Q tRNA(Asp) synthetase (293 aa).

Residues Arg26–Ser30 and Asp62 contribute to the L-glutamate site. Residues Pro29 to Asn39 carry the 'HIGH' region motif. Positions 118, 120, 131, and 135 each coordinate Zn(2+). L-glutamate contacts are provided by Tyr178 and Arg196. Positions Lys234 to Arg238 match the 'KMSKS' region motif. Residue Lys237 coordinates ATP.

It belongs to the class-I aminoacyl-tRNA synthetase family. GluQ subfamily. Zn(2+) is required as a cofactor.

Catalyzes the tRNA-independent activation of glutamate in presence of ATP and the subsequent transfer of glutamate onto a tRNA(Asp). Glutamate is transferred on the 2-amino-5-(4,5-dihydroxy-2-cyclopenten-1-yl) moiety of the queuosine in the wobble position of the QUC anticodon. The chain is Glutamyl-Q tRNA(Asp) synthetase from Parasynechococcus marenigrum (strain WH8102).